Here is a 396-residue protein sequence, read N- to C-terminus: Putative transposase y4rJ (396 aa).

Belongs to the transposase 20 family.

The sequence is that of Putative transposase y4rJ from Sinorhizobium fredii (strain NBRC 101917 / NGR234).